A 91-amino-acid chain; its full sequence is Bacterial microcompartment shell protein PduJ (91 aa).

The BMC domain occupies 4-88 (ALGLVETKGL…PHSDVEAILP (85 aa)).

It belongs to the bacterial microcompartments protein family. As to quaternary structure, homohexamer with a central pore. Interacts with PduP, which targets PduP to the BMC. Interacts with shell protein PduA.

The protein localises to the bacterial microcompartment. The protein operates within polyol metabolism; 1,2-propanediol degradation. Functionally, one of the major shell proteins of the bacterial microcompartment (BMC) dedicated to 1,2-propanediol (1,2-PD) degradation. At least one of PduA or PduJ is required for BMC assembly; it must be encoded as the first gene in the pdu operon. Required for structural integrity of BMCs and to mitigate propionaldehyde toxicity, probably joins facets responsible for BMC closure. Probably the hub for binding multiple enzymes to the interior of the BMC. In terms of biological role, expression of a cosmid containing the full 21-gene pdu operon in E.coli allows E.coli to grow on 1,2-PD with the appearance of BMCs in its cytoplasm. Overexpression of this protein leads to an internal structure with a whorled architecture. The 1,2-PD-specific bacterial microcompartment (BMC) concentrates low levels of 1,2-PD catabolic enzymes, concentrates volatile reaction intermediates thus enhancing pathway flux and keeps the level of toxic, mutagenic propionaldehyde low. The sequence is that of Bacterial microcompartment shell protein PduJ from Citrobacter freundii.